A 471-amino-acid polypeptide reads, in one-letter code: WASH complex subunit 1 (471 aa).

Residues 1–54 (MTPTGTQHSLAGQTYAVPLIQPDLRREEAIQQVADALQYLQKVSGDIFSRISQR) form a required for WASH complex assembly region. The WHD1 stretch occupies residues 1–167 (MTPTGTQHSL…EGLGGLPSNI (167 aa)). The disordered stretch occupies residues 297–471 (EDGVLTARPP…GEEDEDDWES (175 aa)). Residues 304–336 (RPPPPPPPPPPPAPAVLMSVPPPPPPPQAPPGQ) are compositionally biased toward pro residues. Residues 353-471 (QGAPKEVVDP…GEEDEDDWES (119 aa)) form a VCA region. The 23-residue stretch at 365-387 (GRATLLESIRQAGGIGKAKLRSV) folds into the WH2 domain. Residues 386–402 (SVKERKLEKKKQKEQEQ) show a composition bias toward basic and acidic residues. The span at 428–442 (SGKGPGSGASEGPGG) shows a compositional bias: gly residues. Residues 462-471 (GEEDEDDWES) show a composition bias toward acidic residues.

This sequence belongs to the WASH1 family. As to quaternary structure, component of the WASH core complex also described as WASH regulatory complex SHRC composed of WASHC1, WASHC2, WASHC3, WASHC4 and WASHC5. The WASH core complex associates with the F-actin-capping protein dimer (formed by CAPZA1, CAPZA2 or CAPZA3 and CAPZB); the assembly has been initially described as WASH complex. Interacts (via WHD1 region) with WASHC2; the interaction is direct. Interacts with alpha-tubulin. Interacts with BECN1; WASHC1 and AMBRA1 can competitively interact with BECN1. Interacts with BLOC1S2; may associate with the BLOC-1 complex. Interacts with tubulin gamma chain (TUBG1 or TUBG2). Interacts with TBC1D23.

Its subcellular location is the early endosome membrane. The protein resides in the recycling endosome membrane. It is found in the late endosome. It localises to the cytoplasmic vesicle. The protein localises to the autophagosome. Its subcellular location is the cytoplasm. The protein resides in the cytoskeleton. It is found in the microtubule organizing center. It localises to the centrosome. The protein localises to the centriole. Acts as a component of the WASH core complex that functions as a nucleation-promoting factor (NPF) at the surface of endosomes, where it recruits and activates the Arp2/3 complex to induce actin polymerization, playing a key role in the fission of tubules that serve as transport intermediates during endosome sorting. Involved in endocytic trafficking of EGF. Involved in transferrin receptor recycling. Regulates the trafficking of endosomal alpha5beta1 integrin to the plasma membrane and involved in invasive cell migration. In T-cells involved in endosome-to-membrane recycling of receptors including T-cell receptor (TCR), CD28 and ITGAL; proposed to be implicated in T-cell proliferation and effector function. In dendritic cells involved in endosome-to-membrane recycling of major histocompatibility complex (MHC) class II probably involving retromer and subsequently allowing antigen sampling, loading and presentation during T-cell activation. Involved in negative regulation of autophagy independently from its role in endosomal sorting by inhibiting BECN1 ubiquitination to inactivate PIK3C3/Vps34 activity. The polypeptide is WASH complex subunit 1 (Bos taurus (Bovine)).